The sequence spans 166 residues: Cofilin-1 (166 aa).

A2 is modified (N-acetylalanine). Residues S3 and S8 each carry the phosphoserine modification. The region spanning 4–153 is the ADF-H domain; it reads GVAVSDGVIK…KDRCTLAEKL (150 aa). K13 bears the N6-acetyllysine mark. Phosphothreonine is present on T25. Residues 30-34 carry the Nuclear localization signal motif; sequence KKRKK. S41 is subject to Phosphoserine. Y68 carries the post-translational modification Phosphotyrosine. K73 is modified (N6-acetyllysine). K132 participates in a covalent cross-link: Glycyl lysine isopeptide (Lys-Gly) (interchain with G-Cter in SUMO2). A Phosphotyrosine modification is found at Y140. K144 carries the post-translational modification N6-acetyllysine. S156 is subject to Phosphoserine.

The protein belongs to the actin-binding proteins ADF family. In terms of assembly, can bind G- and F-actin in a 1:1 ratio of cofilin to actin. It is a major component of intranuclear and cytoplasmic actin rods. Interacts with the subcortical maternal complex (SCMC) via interaction with TLE6 and NLRP5. Interacts with C9orf72. In terms of processing, inactivated by phosphorylation on Ser-3. Phosphorylated on Ser-3 in resting cells. Dephosphorylated by PDXP/chronophin; this restores its activity in promoting actin filament depolymerization. The phosphorylation of Ser-24 may prevent recognition of the nuclear localization signal. Phosphorylated via a ARRB1-RAC1-LIMK1-PAK1 cascade upon active ligand stimulation of atypical chemokine receptor ACKR2.

The protein resides in the nucleus matrix. It is found in the cytoplasm. Its subcellular location is the cytoskeleton. The protein localises to the cell projection. It localises to the ruffle membrane. The protein resides in the lamellipodium membrane. It is found in the lamellipodium. Its subcellular location is the growth cone. The protein localises to the axon. In terms of biological role, binds to F-actin and exhibits pH-sensitive F-actin depolymerizing activity. Important for normal progress through mitosis and normal cytokinesis. In conjunction with the subcortical maternal complex (SCMC), plays an essential role for zygotes to progress beyond the first embryonic cell divisions via regulation of actin dynamics. Required for the centralization of the mitotic spindle and symmetric division of zygotes. Plays a role in the regulation of cell morphology and cytoskeletal organization in epithelial cells. Required for the up-regulation of atypical chemokine receptor ACKR2 from endosomal compartment to cell membrane, increasing its efficiency in chemokine uptake and degradation. Required for neural tube morphogenesis and neural crest cell migration. The sequence is that of Cofilin-1 (CFL1) from Bos taurus (Bovine).